We begin with the raw amino-acid sequence, 225 residues long: Putative O-phosphotransferase MT2714 (225 aa).

Position 30-37 (30-37 (GGSSAGKT)) interacts with ATP.

The protein to S.violaceus chloramphenicol 3-O phosphotransferase.

This chain is Putative O-phosphotransferase MT2714, found in Mycobacterium tuberculosis (strain CDC 1551 / Oshkosh).